The primary structure comprises 261 residues: ATP synthase subunit a (261 aa).

Residues 1-14 (MSTLSFNNISTEVL) constitute a propeptide, removed in mature form. 7 consecutive transmembrane segments (helical) span residues 38 to 58 (ITNI…INLL), 96 to 116 (IYFP…LIGM), 126 to 146 (HFVV…ILGF), 153 to 173 (FFSL…LVLI), 191 to 211 (ANIL…YNIM), 214 to 234 (GIIF…FSGL), and 235 to 255 (ELGI…GYIK).

The protein belongs to the ATPase A chain family. In terms of assembly, F-type ATPases have 2 components, CF(1) - the catalytic core - and CF(0) - the membrane proton channel. CF(1) has five subunits: alpha(3), beta(3), gamma(1), delta(1), epsilon(1). CF(0) has three main subunits: a, b and c.

It is found in the mitochondrion inner membrane. Its function is as follows. Mitochondrial membrane ATP synthase (F(1)F(0) ATP synthase or Complex V) produces ATP from ADP in the presence of a proton gradient across the membrane which is generated by electron transport complexes of the respiratory chain. F-type ATPases consist of two structural domains, F(1) - containing the extramembraneous catalytic core and F(0) - containing the membrane proton channel, linked together by a central stalk and a peripheral stalk. During catalysis, ATP synthesis in the catalytic domain of F(1) is coupled via a rotary mechanism of the central stalk subunits to proton translocation. Key component of the proton channel; it may play a direct role in the translocation of protons across the membrane. This Neurospora crassa (strain ATCC 24698 / 74-OR23-1A / CBS 708.71 / DSM 1257 / FGSC 987) protein is ATP synthase subunit a (atp-6).